Reading from the N-terminus, the 418-residue chain is Sialidase-3 (418 aa).

The FRIP motif motif lies at 24 to 27 (YRIP). The substrate site is built by Arg-25 and Arg-45. The active-site Proton acceptor is Asp-50. A BNR 1 repeat occupies 129–140 (LCSEDAGCSWGE). Substrate-binding residues include Tyr-179 and Tyr-181. The BNR 2 repeat unit spans residues 203–214 (SDDFGVTWHHGK). Residues Glu-223 and Arg-243 each contribute to the substrate site. The BNR 3 repeat unit spans residues 254–265 (STDSGGCFQKPT). Phosphoserine is present on Ser-312. Arg-339 lines the substrate pocket. Tyr-369 functions as the Nucleophile in the catalytic mechanism. Glu-386 is a catalytic residue.

The protein belongs to the glycosyl hydrolase 33 family. Interacts with CAV1; this interaction enhances NEU3 sialidase activity within caveola. Interacts with EGFR; this interaction mediates desialylation of EGFR and enhances downstream signaling. In terms of processing, palmitoylated; may regulate intracellular trafficking and anchorage to plasma membrane and endomembranes. As to expression, expressed in heart, brain and cerebral cortex.

It localises to the cell membrane. It is found in the membrane. The protein localises to the caveola. Its subcellular location is the early endosome membrane. The protein resides in the recycling endosome membrane. It localises to the lysosome membrane. The catalysed reaction is Hydrolysis of alpha-(2-&gt;3)-, alpha-(2-&gt;6)-, alpha-(2-&gt;8)- glycosidic linkages of terminal sialic acid residues in oligosaccharides, glycoproteins, glycolipids, colominic acid and synthetic substrates.. The enzyme catalyses a ganglioside GD1a + H2O = a ganglioside GM1 + N-acetylneuraminate. It carries out the reaction a ganglioside GD1a (d18:1(4E)) + H2O = a ganglioside GM1 (d18:1(4E)) + N-acetylneuraminate. It catalyses the reaction a ganglioside GD1b + H2O = a ganglioside GM1 + N-acetylneuraminate. The catalysed reaction is a ganglioside GD1b (d18:1(4E)) + H2O = a ganglioside GM1 (d18:1(4E)) + N-acetylneuraminate. The enzyme catalyses a ganglioside GD3 + H2O = a ganglioside GM3 + N-acetylneuraminate. It carries out the reaction a ganglioside GD3 (d18:1(4E)) + H2O = a ganglioside GM3 (d18:1(4E)) + N-acetylneuraminate. It catalyses the reaction a ganglioside GM3 + H2O = a beta-D-galactosyl-(1-&gt;4)-beta-D-glucosyl-(1&lt;-&gt;1)-ceramide + N-acetylneuraminate. The catalysed reaction is a ganglioside GM1 + H2O = a ganglioside GA1 + N-acetylneuraminate. The enzyme catalyses a ganglioside GM1 (d18:1(4E)) + H2O = a ganglioside GA1 (d18:1(4E)) + N-acetylneuraminate. It carries out the reaction a ganglioside GM2 (d18:1(4E)) + H2O = a ganglioside GA2 (d18:1(4E)) + N-acetylneuraminate. It catalyses the reaction a ganglioside GM3 (d18:1(4E)) + H2O = a beta-D-Gal-(1-&gt;4)-beta-D-Glc-(1&lt;-&gt;1)-Cer(d18:1(4E)) + N-acetylneuraminate. The catalysed reaction is a ganglioside GT1b + H2O = a ganglioside GD1b + N-acetylneuraminate. Functionally, exo-alpha-sialidase that catalyzes the hydrolytic cleavage of the terminal sialic acid (N-acetylneuraminic acid, Neu5Ac) of a glycan moiety in the catabolism of glycolipids, glycoproteins and oligosacharides. Displays high catalytic efficiency for gangliosides including alpha-(2-&gt;3)-sialylated GD1a and GM3 and alpha-(2-&gt;8)-sialylated GD3. Plays a role in the regulation of transmembrane signaling through the modulation of ganglioside content of the lipid bilayer and by direct interaction with signaling receptors, such as EGFR. Desialylates EGFR and activates downstream signaling in proliferating cells. Contributes to clathrin-mediated endocytosis by regulating sorting of endocytosed receptors to early and recycling endosomes. The protein is Sialidase-3 (Neu3) of Mus musculus (Mouse).